The sequence spans 144 residues: MRQTTIVKHKEVNKKWFLIDADGVVLGKLATLTASILRGKNKPDFTPNVDMGDNIVIINAEKVVLTANKEEDKKYYSHSGYPGGLKVINAAKLRAKKPIAIVEKAVKGMLPHTKLGRQQFRNLYVYAGSVHKQEAQQPVRIEVK.

This sequence belongs to the universal ribosomal protein uL13 family. As to quaternary structure, part of the 50S ribosomal subunit.

Its function is as follows. This protein is one of the early assembly proteins of the 50S ribosomal subunit, although it is not seen to bind rRNA by itself. It is important during the early stages of 50S assembly. The sequence is that of Large ribosomal subunit protein uL13 from Mycoplasmopsis pulmonis (strain UAB CTIP) (Mycoplasma pulmonis).